The chain runs to 957 residues: MTQTLSQLENSGAFIERHIGPDAAQQQEMLNAVGAQSLNALTGQIVPKDIQLATPPQVGAPATEYAALAELKAIASRNKRFTSYIGMGYTAVQLPPVILRNMLENPGWYTAYTPYQPEVSQGRLEALLNFQQVTLDLTGLDMASASLLDEATAAAEAMAMAKRVSKLKNANRFFVASDVHPQTLDVVRTRAETFGFEVIVDDAQKVLDHQDVFGVLLQQVGTTGEIHDYTALISELKSRKIVVSVAADIMALVLLTAPGKQGADIVFGSAQRFGVPMGYGGPHAAFFAAKDEYKRSMPGRIIGVSKDAAGNTALRMAMQTREQHIRREKANSNICTSQVLLANIASLYAVYHGPVGLKRIANRIHRLTDILAAGLQQKGLKLRHAHYFDTLCVEVVDKAGVLARAEAAEINLRSDILNAVGITLDETTTRENVMQLFSVLLGDNHGLDIDTLDKDVAHDSRSIQAAMLRDDEILTHPVFNRYHSETEMMRYMHSLERKDLALNQAMIPLGSCTMKLNAAAEMIPITWPEFAELHPFCPPEQAEGYQQMIAQLADWLVKLTGYDAVCMQPNSGAQGEYAGLLAIRHYHESRNEGHRDICLIPASAHGTNPASAHMAGMQVVVVACDKNGNIDLTDLRAKAEQAGDNLSCIMVTYPSTHGVYEETIREVCEVVHQFGGQVYLDGANMNAQVGITSPGFIGADVSHLNLHKTFCIPHGGGGPGMGPIGVKAHLAPFVPGHSVVQIEGMLTRQGAVSAAPFGSASILPISWMYIRMMGAEGLKKASQVAILNANYIASRLQDAFPVLYTGRDGRVAHECILDIRPLKEETGISELDIAKRLIDYGFHAPTMSFPVAGTLMVEPTESESKVELDRFIDAMLAIRAEIDQVKAGVWPLEDNPLVNAPHIQSELVAEWAHPYSREVAVFPAGVADKYWPTVKRLDDVYGDRNLFCSCVPISEYQ.

Lysine 708 is subject to N6-(pyridoxal phosphate)lysine.

It belongs to the GcvP family. In terms of assembly, the glycine cleavage system is composed of four proteins: P, T, L and H. Requires pyridoxal 5'-phosphate as cofactor.

The catalysed reaction is N(6)-[(R)-lipoyl]-L-lysyl-[glycine-cleavage complex H protein] + glycine + H(+) = N(6)-[(R)-S(8)-aminomethyldihydrolipoyl]-L-lysyl-[glycine-cleavage complex H protein] + CO2. The glycine cleavage system catalyzes the degradation of glycine. The P protein binds the alpha-amino group of glycine through its pyridoxal phosphate cofactor; CO(2) is released and the remaining methylamine moiety is then transferred to the lipoamide cofactor of the H protein. The chain is Glycine dehydrogenase (decarboxylating) from Escherichia coli (strain UTI89 / UPEC).